The following is a 97-amino-acid chain: RNA-binding protein Hfq (97 aa).

Residues 10 to 70 (DPFLNALRKE…ISTIVPARSV (61 aa)) form the Sm domain. The disordered stretch occupies residues 74–97 (HENRPQAAPTSTLVQVETVQQPAE). Residues 81 to 97 (APTSTLVQVETVQQPAE) show a composition bias toward polar residues.

It belongs to the Hfq family. In terms of assembly, homohexamer.

Functionally, RNA chaperone that binds small regulatory RNA (sRNAs) and mRNAs to facilitate mRNA translational regulation in response to envelope stress, environmental stress and changes in metabolite concentrations. Also binds with high specificity to tRNAs. The polypeptide is RNA-binding protein Hfq (Neisseria meningitidis serogroup A / serotype 4A (strain DSM 15465 / Z2491)).